We begin with the raw amino-acid sequence, 130 residues long: Small ribosomal subunit protein uS8 (130 aa).

This sequence belongs to the universal ribosomal protein uS8 family. Part of the 30S ribosomal subunit.

Its function is as follows. One of the primary rRNA binding proteins, it binds directly to 16S rRNA central domain where it helps coordinate assembly of the platform of the 30S subunit. In Methanococcoides burtonii (strain DSM 6242 / NBRC 107633 / OCM 468 / ACE-M), this protein is Small ribosomal subunit protein uS8.